The chain runs to 640 residues: 1,4-alpha-glucan branching enzyme GlgB (640 aa).

Residue Asp-318 is the Nucleophile of the active site. The active-site Proton donor is Glu-371.

Belongs to the glycosyl hydrolase 13 family. GlgB subfamily. In terms of assembly, monomer.

The catalysed reaction is Transfers a segment of a (1-&gt;4)-alpha-D-glucan chain to a primary hydroxy group in a similar glucan chain.. It functions in the pathway glycan biosynthesis; glycogen biosynthesis. Catalyzes the formation of the alpha-1,6-glucosidic linkages in glycogen by scission of a 1,4-alpha-linked oligosaccharide from growing alpha-1,4-glucan chains and the subsequent attachment of the oligosaccharide to the alpha-1,6 position. The chain is 1,4-alpha-glucan branching enzyme GlgB from Francisella tularensis subsp. holarctica (strain FTNF002-00 / FTA).